A 140-amino-acid chain; its full sequence is Large ribosomal subunit protein bL17 (140 aa).

The interval 119 to 140 (DTTAKGQDSGPVQVEEQENEEA) is disordered.

This sequence belongs to the bacterial ribosomal protein bL17 family. In terms of assembly, part of the 50S ribosomal subunit. Contacts protein L32.

This Zymomonas mobilis subsp. mobilis (strain ATCC 31821 / ZM4 / CP4) protein is Large ribosomal subunit protein bL17.